The primary structure comprises 147 residues: Cyanate hydratase (147 aa).

Catalysis depends on residues R88, E91, and S114.

It belongs to the cyanase family.

The enzyme catalyses cyanate + hydrogencarbonate + 3 H(+) = NH4(+) + 2 CO2. In terms of biological role, catalyzes the reaction of cyanate with bicarbonate to produce ammonia and carbon dioxide. The sequence is that of Cyanate hydratase from Albidiferax ferrireducens (strain ATCC BAA-621 / DSM 15236 / T118) (Rhodoferax ferrireducens).